The primary structure comprises 328 residues: Carbonic anhydrase-related protein 10 (328 aa).

Residues 31–301 form the Alpha-carbonic anhydrase domain; the sequence is GWWAYKEVVQ…LNNRCIRTNI (271 aa).

This sequence belongs to the alpha-carbonic anhydrase family.

Its function is as follows. Does not have a catalytic activity. The polypeptide is Carbonic anhydrase-related protein 10 (CA10) (Bos taurus (Bovine)).